A 323-amino-acid chain; its full sequence is Transcription initiation factor IIB 7 (323 aa).

The segment covering 1–16 (MTRSTRQRERETAAKQ) has biased composition (basic and acidic residues). The segment at 1 to 35 (MTRSTRQRERETAAKQEEEEDSEEGVRECPECGSD) is disordered. The TFIIB-type zinc finger occupies 24–56 (EGVRECPECGSDNLVKSSDRAELVCNDCGLVVE). Zn(2+) contacts are provided by Cys-29, Cys-32, Cys-48, and Cys-51. A run of 2 repeats spans residues 142–225 (SEID…SQEL) and 236–317 (KYVP…EQIE).

The protein belongs to the TFIIB family.

Stabilizes TBP binding to an archaeal box-A promoter. Also responsible for recruiting RNA polymerase II to the pre-initiation complex (DNA-TBP-TFIIB). The protein is Transcription initiation factor IIB 7 of Halobacterium salinarum (strain ATCC 700922 / JCM 11081 / NRC-1) (Halobacterium halobium).